The sequence spans 224 residues: PKHD-type hydroxylase Shewana3_0717 (224 aa).

Residues 78 to 176 (QFYPPLFNRY…RTAAFMWLQS (99 aa)) enclose the Fe2OG dioxygenase domain. Fe cation-binding residues include His96, Asp98, and His157. Arg167 lines the 2-oxoglutarate pocket.

Fe(2+) serves as cofactor. L-ascorbate is required as a cofactor.

This Shewanella sp. (strain ANA-3) protein is PKHD-type hydroxylase Shewana3_0717.